Reading from the N-terminus, the 928-residue chain is DENN domain-containing protein 2C (928 aa).

Disordered stretches follow at residues Lys-67 to Thr-105 and Gln-245 to Arg-266. Positions Glu-85–Thr-105 are enriched in basic and acidic residues. Position 271 is a phosphoserine (Ser-271). The tract at residues Lys-428–Lys-456 is disordered. Positions Glu-492–Thr-641 constitute a uDENN domain. The region spanning Arg-663 to Glu-796 is the cDENN domain. Residues Arg-798 to Val-888 enclose the dDENN domain.

In terms of biological role, guanine nucleotide exchange factor (GEF) which may activate RAB9A and RAB9B. Promotes the exchange of GDP to GTP, converting inactive GDP-bound Rab proteins into their active GTP-bound form. This is DENN domain-containing protein 2C (DENND2C) from Homo sapiens (Human).